The chain runs to 213 residues: Pyrrolidone-carboxylate peptidase (213 aa).

Catalysis depends on residues Glu81, Cys144, and His166.

Belongs to the peptidase C15 family. In terms of assembly, homotetramer.

Its subcellular location is the cytoplasm. It carries out the reaction Release of an N-terminal pyroglutamyl group from a polypeptide, the second amino acid generally not being Pro.. Functionally, removes 5-oxoproline from various penultimate amino acid residues except L-proline. The sequence is that of Pyrrolidone-carboxylate peptidase from Pseudomonas fluorescens (strain SBW25).